The sequence spans 575 residues: 2-isopropylmalate synthase (575 aa).

One can recognise a Pyruvate carboxyltransferase domain in the interval 31-305; the sequence is PTWLSTDLRD…APGLDFSDIA (275 aa). Mg(2+) contacts are provided by Asp-40, His-244, His-246, and Asn-280. The segment at 437-575 is regulatory domain; sequence PVQASPDFSD…RFAGEEQGKG (139 aa).

Belongs to the alpha-IPM synthase/homocitrate synthase family. LeuA type 2 subfamily. In terms of assembly, homodimer. It depends on Mg(2+) as a cofactor.

The protein localises to the cytoplasm. The catalysed reaction is 3-methyl-2-oxobutanoate + acetyl-CoA + H2O = (2S)-2-isopropylmalate + CoA + H(+). It functions in the pathway amino-acid biosynthesis; L-leucine biosynthesis; L-leucine from 3-methyl-2-oxobutanoate: step 1/4. Catalyzes the condensation of the acetyl group of acetyl-CoA with 3-methyl-2-oxobutanoate (2-ketoisovalerate) to form 3-carboxy-3-hydroxy-4-methylpentanoate (2-isopropylmalate). The sequence is that of 2-isopropylmalate synthase from Herbaspirillum seropedicae (strain SmR1).